Reading from the N-terminus, the 440-residue chain is FAD-dependent monooxygenase afoD (440 aa).

The chain crosses the membrane as a helical span at residues 10–30 (PLSIAIIGGGIIGLMTALGLL). FAD-binding residues include glutamate 41, leucine 145, and aspartate 320. The N-linked (GlcNAc...) asparagine glycan is linked to asparagine 352.

The protein belongs to the paxM FAD-dependent monooxygenase family. FAD is required as a cofactor.

The protein resides in the membrane. In terms of biological role, FAD-dependent monooxygenase; part of the gene cluster that mediates the biosynthesis of asperfuranone, a probable antitumor agent. The polyketide synthase afoG is responsible for producing the 3,5-dimethyloctadienone moiety from acetyl-CoA, three malonyl-CoA, and two S-adenosyl methionines (SAM). The 3,5-dimethyloctadienone moiety is then loaded onto the SAT domain of afoE and extended with four malonyl-CoA and one SAM, which leads to the formation of 2,4-dihydroxy-6-(5,7-dimethyl-2-oxo-trans-3-trans-5-nonadienyl)-3-methylbenzaldehyde (compound 2) after reductive release and aldol condensation. AfoD is the next enzyme in the biosynthesis sequence and hydroxylates the side chain at the benzylic position of compound 2. After benzylic hydroxylation, a furan ring is formed after five-member ring hemiacetal formation and water elimination. AfoF and afoC are proposed to oxidize the R-diketone proton and to reduce the unconjugated carbonyl group, respectively, to generate asperfuranone. Since no intermediates could be isolated from afoF and afoC deletants, the sequence of these two enzymes is not fully understood. Moreover, since afoC deletant still produces a small amount of asperfuranone, other endogenous oxidoreductases might catalyze the same reaction with much less efficiency. The sequence is that of FAD-dependent monooxygenase afoD from Emericella nidulans (strain FGSC A4 / ATCC 38163 / CBS 112.46 / NRRL 194 / M139) (Aspergillus nidulans).